The primary structure comprises 374 residues: Chaperone protein DnaJ (374 aa).

Residues 5–70 (DFYEILGLGK…QKRDAYDRYG (66 aa)) enclose the J domain. A disordered region spans residues 28–47 (LAMKHHPDRNPDSKGAEDKF). Residues 35–47 (DRNPDSKGAEDKF) show a composition bias toward basic and acidic residues. A CR-type zinc finger spans residues 134 to 212 (GYDTTIRVPS…CSGAGKIKRN (79 aa)). Residues cysteine 147, cysteine 150, cysteine 164, cysteine 167, cysteine 186, cysteine 189, cysteine 200, and cysteine 203 each coordinate Zn(2+). CXXCXGXG motif repeat units follow at residues 147-154 (CETCDGSG), 164-171 (CTTCGGHG), 186-193 (CPKCHGSG), and 200-207 (CTACSGAG).

It belongs to the DnaJ family. As to quaternary structure, homodimer. Requires Zn(2+) as cofactor.

It localises to the cytoplasm. Functionally, participates actively in the response to hyperosmotic and heat shock by preventing the aggregation of stress-denatured proteins and by disaggregating proteins, also in an autonomous, DnaK-independent fashion. Unfolded proteins bind initially to DnaJ; upon interaction with the DnaJ-bound protein, DnaK hydrolyzes its bound ATP, resulting in the formation of a stable complex. GrpE releases ADP from DnaK; ATP binding to DnaK triggers the release of the substrate protein, thus completing the reaction cycle. Several rounds of ATP-dependent interactions between DnaJ, DnaK and GrpE are required for fully efficient folding. Also involved, together with DnaK and GrpE, in the DNA replication of plasmids through activation of initiation proteins. The sequence is that of Chaperone protein DnaJ from Herminiimonas arsenicoxydans.